Consider the following 218-residue polypeptide: Adenylate kinase (218 aa).

ATP is bound at residue 10–15 (GAGKGT). Positions 30-59 (STGDMLRAAVQAQTPVGIEAKKVMDAGKLV) are NMP. AMP contacts are provided by residues threonine 31, arginine 36, 57 to 59 (KLV), 85 to 88 (GFPR), and glutamine 92. An LID region spans residues 122-159 (GRRVHLSSGRTYHVRFNPPKKEGLDDLTGEPLVQREDD). Residues arginine 123 and 132-133 (TY) contribute to the ATP site. Residues arginine 156 and arginine 167 each coordinate AMP. Glycine 203 lines the ATP pocket.

Belongs to the adenylate kinase family. Monomer.

The protein resides in the cytoplasm. It carries out the reaction AMP + ATP = 2 ADP. Its pathway is purine metabolism; AMP biosynthesis via salvage pathway; AMP from ADP: step 1/1. In terms of biological role, catalyzes the reversible transfer of the terminal phosphate group between ATP and AMP. Plays an important role in cellular energy homeostasis and in adenine nucleotide metabolism. In Chlorobium phaeobacteroides (strain DSM 266 / SMG 266 / 2430), this protein is Adenylate kinase.